The primary structure comprises 377 residues: Succinyl-diaminopimelate desuccinylase (377 aa).

H66 lines the Zn(2+) pocket. D68 is an active-site residue. Position 99 (D99) interacts with Zn(2+). Residue E133 is the Proton acceptor of the active site. Zn(2+)-binding residues include E134, E163, and H349.

The protein belongs to the peptidase M20A family. DapE subfamily. As to quaternary structure, homodimer. Requires Zn(2+) as cofactor. It depends on Co(2+) as a cofactor.

It carries out the reaction N-succinyl-(2S,6S)-2,6-diaminopimelate + H2O = (2S,6S)-2,6-diaminopimelate + succinate. It participates in amino-acid biosynthesis; L-lysine biosynthesis via DAP pathway; LL-2,6-diaminopimelate from (S)-tetrahydrodipicolinate (succinylase route): step 3/3. Catalyzes the hydrolysis of N-succinyl-L,L-diaminopimelic acid (SDAP), forming succinate and LL-2,6-diaminopimelate (DAP), an intermediate involved in the bacterial biosynthesis of lysine and meso-diaminopimelic acid, an essential component of bacterial cell walls. The sequence is that of Succinyl-diaminopimelate desuccinylase from Legionella pneumophila (strain Paris).